The chain runs to 113 residues: Small ribosomal subunit protein bS6 (113 aa).

The protein belongs to the bacterial ribosomal protein bS6 family.

In terms of biological role, binds together with bS18 to 16S ribosomal RNA. The chain is Small ribosomal subunit protein bS6 from Pseudoalteromonas translucida (strain TAC 125).